The sequence spans 905 residues: DNA mismatch repair protein MutS (905 aa).

The disordered stretch occupies residues Leu-388 to Pro-410. Position 638-645 (Gly-638–Ser-645) interacts with ATP. Positions Arg-826 to Pro-847 are disordered. Residues Gly-831 to Thr-840 show a composition bias toward polar residues.

Belongs to the DNA mismatch repair MutS family.

Its function is as follows. This protein is involved in the repair of mismatches in DNA. It is possible that it carries out the mismatch recognition step. This protein has a weak ATPase activity. The polypeptide is DNA mismatch repair protein MutS (Nitratidesulfovibrio vulgaris (strain DP4) (Desulfovibrio vulgaris)).